Reading from the N-terminus, the 847-residue chain is Bifunctional protein argC, mitochondrial (847 aa).

Positions 100 to 331 (QIVLVKIGGG…PPSTSITITS (232 aa)) are acetylglutamate kinase. The N-acetyltransferase domain maps to 352-508 (GEVMHSHESP…CLSQSSTYLS (157 aa)). The N-acetyl-gamma-glutamyl-phosphate reductase stretch occupies residues 531 to 846 (FRVGLIGARG…LDELASIKNE (316 aa)). Residue Cys665 is part of the active site.

It in the N-terminal section; belongs to the acetylglutamate kinase family. This sequence in the C-terminal section; belongs to the NAGSA dehydrogenase family.

It is found in the mitochondrion. The enzyme catalyses N-acetyl-L-glutamate 5-semialdehyde + phosphate + NADP(+) = N-acetyl-L-glutamyl 5-phosphate + NADPH + H(+). It carries out the reaction N-acetyl-L-glutamate + ATP = N-acetyl-L-glutamyl 5-phosphate + ADP. It functions in the pathway amino-acid biosynthesis; L-arginine biosynthesis; N(2)-acetyl-L-ornithine from L-glutamate: step 2/4. It participates in amino-acid biosynthesis; L-arginine biosynthesis; N(2)-acetyl-L-ornithine from L-glutamate: step 3/4. This chain is Bifunctional protein argC, mitochondrial (argC), found in Dictyostelium discoideum (Social amoeba).